Consider the following 305-residue polypeptide: MNDLMTKSFLSYVELKKQARTDMESDRDLEKGEDFNFDFSPADEENLSGFFQEIETIKTLIEEITHLLLDLQNLNEETKSTHSTKILRGLRDRMESNIVTISRKANTVKTLIETLEKRNVANRTSFKEGSCVDRTRTSITNGVRKKLRDTMSEFHRLRERIFADYREDLKRKYFLATGEEPSNEDMEKMISGSGSCSDLVKTFEVKPEMDLKTKERHEAVNDIKRSLNRLHQVFLDMAVLVETQGDRIDDIEANVANAGSFVSGGTNSLYYANQMKKKTKSWVLWVSILGVLILLVCVISMLASR.

Met-1 carries the N-acetylmethionine modification. Residues 52–119 are a coiled coil; it reads QEIETIKTLI…TLIETLEKRN (68 aa). The t-SNARE coiled-coil homology domain occupies 210–272; the sequence is DLKTKERHEA…SGGTNSLYYA (63 aa).

This sequence belongs to the syntaxin family. In terms of assembly, part of the t-SNARE complex.

In terms of biological role, vesicle trafficking protein that functions in the secretory pathway. The protein is Syntaxin-112 (SYP112) of Arabidopsis thaliana (Mouse-ear cress).